We begin with the raw amino-acid sequence, 465 residues long: MILANAFCIVLFVDETLRSLAAPPSPPGQDLQGWRVPVDCIRANKLCAAEGSCSSRYRTLRQCLAGRDRNTMLANKECQAALEVLQESPLYDCRCKRGMRKEIQCLQVYWSIHLGLAEGEEFYEASPYEPITSRLSDIFRLASIFSGMDPATNSKSNHCLDAAKACNLNDNCKRLRSGYISTCSKEISATEHCSRRKCHKALRQFFDNVPSEYTYRLLFCSCKDQACAEPRRQTIVPFCSYEDKEKPNCLDLRNVCRADHLCRSRLADFHANCQASFQSLTSCPGDNYQACLGSYTGLIGFDMTPNYVDASTTSITISPWCSCKGSGNLEEECEKFLRDFTENPCLRNAIQAFGNGTDVNLSPKNPSPPITMLPKVEKSPALPDDINDSNTMYDTSIITTCTSIQEHGQKLNKSKEQSLCYSETQLTTDTMPDQKTFVDQKAAGSRHRAARILPAVPIVLLKLLL.

Residues 1-21 (MILANAFCIVLFVDETLRSLA) form the signal peptide. 14 disulfide bridges follow: C40–C93, C47–C53, C63–C78, C95–C105, C159–C220, C166–C172, C183–C198, C193–C239, C222–C227, C249–C321, C256–C262, C273–C291, C283–C345, and C323–C333. N-linked (GlcNAc...) asparagine glycans are attached at residues N355, N387, and N412. A lipid anchor (GPI-anchor amidated serine) is attached at S445. Positions 446–465 (RHRAARILPAVPIVLLKLLL) are cleaved as a propeptide — removed in mature form.

Belongs to the GDNFR family. As to quaternary structure, interacts with NRTN ligand and RET: forms a 2:2:2 ternary complex composed of NRTN ligand, GFRA2 and RET receptor.

The protein resides in the cell membrane. Its function is as follows. Receptor for neurturin (NRTN), a growth factor that supports the survival of sympathetic neurons. NRTN-binding leads to autophosphorylation and activation of the RET receptor. The chain is GDNF family receptor alpha-2 (GFRA2) from Gallus gallus (Chicken).